The primary structure comprises 392 residues: Spermatogenesis associated 6-like protein (392 aa).

Residues serine 260 and serine 263 each carry the phosphoserine modification. Residues 286–301 show a composition bias toward low complexity; sequence SCLDSSQFGKSSSSKQ. The tract at residues 286-305 is disordered; sequence SCLDSSQFGKSSSSKQGDAD.

The protein belongs to the SPATA6 family.

This Homo sapiens (Human) protein is Spermatogenesis associated 6-like protein (SPATA6L).